Reading from the N-terminus, the 419-residue chain is Histidine--tRNA ligase (419 aa).

The protein belongs to the class-II aminoacyl-tRNA synthetase family. As to quaternary structure, homodimer.

It localises to the cytoplasm. It catalyses the reaction tRNA(His) + L-histidine + ATP = L-histidyl-tRNA(His) + AMP + diphosphate + H(+). In Mycoplasmoides gallisepticum (strain R(low / passage 15 / clone 2)) (Mycoplasma gallisepticum), this protein is Histidine--tRNA ligase.